The chain runs to 208 residues: N-(5'-phosphoribosyl)anthranilate isomerase (208 aa).

Belongs to the TrpF family.

The enzyme catalyses N-(5-phospho-beta-D-ribosyl)anthranilate = 1-(2-carboxyphenylamino)-1-deoxy-D-ribulose 5-phosphate. It participates in amino-acid biosynthesis; L-tryptophan biosynthesis; L-tryptophan from chorismate: step 3/5. The sequence is that of N-(5'-phosphoribosyl)anthranilate isomerase from Methanothrix thermoacetophila (strain DSM 6194 / JCM 14653 / NBRC 101360 / PT) (Methanosaeta thermophila).